Here is a 256-residue protein sequence, read N- to C-terminus: Fumarate reductase cytochrome b subunit (256 aa).

Residues 1-30 are Cytoplasmic-facing; that stretch reads MTNESILESYSGVTPERKKSRMPAKLDWWQ. A helical membrane pass occupies residues 31–52; the sequence is SATGLFLGLFMIGHMFFVSTIL. His-44 is a binding site for heme b. At 53-76 the chain is on the periplasmic side; sequence LGDNVMLWVTKKFELDFIFEGGKP. Residues 77–98 traverse the membrane as a helical segment; that stretch reads IVVSFLAAFVFAVFIAHAFLAM. Residue His-93 coordinates heme b. Topologically, residues 99–124 are cytoplasmic; the sequence is RKFPINYRQYLTFKTHKDLMRHGDTT. The helical transmembrane segment at 125–149 threads the bilayer; it reads LWWIQAMTGFAMFFLGSVHLYIMMT. His-143 provides a ligand contact to heme b. The Periplasmic segment spans residues 150–165; sequence QPQTIGPVSSSFRMVS. The helical transmembrane segment at 166–188 threads the bilayer; sequence EWMWPLYLVLLFAVELHGSVGLY. His-182 lines the heme b pocket. The Cytoplasmic portion of the chain corresponds to 189-206; sequence RLAVKWGWFDGETPDKTR. A helical membrane pass occupies residues 207–230; that stretch reads ANLKKLKTLMSAFLIVLGLLTFGA. Topologically, residues 231-256 are periplasmic; that stretch reads YVKKGLEQTDPNIDYKYFDYKRTHHR.

Belongs to the diheme cytochrome b FrdC family. In terms of assembly, part of an enzyme complex containing three subunits: a flavoprotein (frdA), an iron-sulfur protein (frdB), and diheme cytochrome b (frdC). Requires heme b as cofactor.

It is found in the cell inner membrane. The fumarate reductase enzyme complex is required for fumarate respiration using formate or sulfide as electron donor. This subunit anchors the complex in the membrane and binds a diheme cytochrome b. The polypeptide is Fumarate reductase cytochrome b subunit (frdC) (Wolinella succinogenes (strain ATCC 29543 / DSM 1740 / CCUG 13145 / JCM 31913 / LMG 7466 / NCTC 11488 / FDC 602W) (Vibrio succinogenes)).